Reading from the N-terminus, the 328-residue chain is Arabinose 5-phosphate isomerase KdsD (328 aa).

The region spanning 41-184 is the SIS domain; sequence ACEKMFNCTG…AVALLKARGF (144 aa). Substrate is bound by residues 75–76, His82, His88, 114–123, and 148–150; these read GT, ALIPVLKRLH, and KVP. Position 82 (His82) interacts with Zn(2+). Residues 210–268 form the CBS 1 domain; sequence MHTGDEIPHVNKHATLRDALLEITRKNLGMTVICDESMKIDGIFTDGDLRRVFDMGGDM. Glu275 serves as a coordination point for substrate. Positions 277 to 328 constitute a CBS 2 domain; that stretch reads MTPGGIRVRPGILAVDALNLMQSRHITSVLVADGDQLLGVLHMHDLLRAGVV.

It belongs to the SIS family. GutQ/KpsF subfamily. As to quaternary structure, homotetramer.

The catalysed reaction is D-arabinose 5-phosphate = D-ribulose 5-phosphate. It functions in the pathway carbohydrate biosynthesis; 3-deoxy-D-manno-octulosonate biosynthesis; 3-deoxy-D-manno-octulosonate from D-ribulose 5-phosphate: step 1/3. It participates in bacterial outer membrane biogenesis; lipopolysaccharide biosynthesis. Functionally, involved in the biosynthesis of 3-deoxy-D-manno-octulosonate (KDO), a unique 8-carbon sugar component of lipopolysaccharides (LPSs). Catalyzes the reversible aldol-ketol isomerization between D-ribulose 5-phosphate (Ru5P) and D-arabinose 5-phosphate (A5P). This chain is Arabinose 5-phosphate isomerase KdsD (kdsD), found in Salmonella typhimurium (strain LT2 / SGSC1412 / ATCC 700720).